A 226-amino-acid chain; its full sequence is Thaumatin-like protein (226 aa).

Residues methionine 1–alanine 24 form the signal peptide. 8 disulfides stabilise this stretch: cysteine 33/cysteine 225, cysteine 74/cysteine 84, cysteine 89/cysteine 95, cysteine 140/cysteine 214, cysteine 145/cysteine 197, cysteine 153/cysteine 163, cysteine 167/cysteine 176, and cysteine 177/cysteine 184.

This sequence belongs to the thaumatin family. In terms of tissue distribution, expressed in fruits.

Its subcellular location is the secreted. 3D-structure modeling suggests it may have endo-(1,3)-beta-glucanase activity. The polypeptide is Thaumatin-like protein (Olea europaea (Common olive)).